A 516-amino-acid polypeptide reads, in one-letter code: Endoglucanase 17 (516 aa).

The signal sequence occupies residues 1–29 (MALLLVSSSSSYALRVTIFLSFFFFLCNG). The Nucleophile role is filled by Asp105. Residues His433, Asp484, and Glu493 contribute to the active site.

The protein belongs to the glycosyl hydrolase 9 (cellulase E) family.

It localises to the secreted. The enzyme catalyses Endohydrolysis of (1-&gt;4)-beta-D-glucosidic linkages in cellulose, lichenin and cereal beta-D-glucans.. This Arabidopsis thaliana (Mouse-ear cress) protein is Endoglucanase 17.